A 209-amino-acid chain; its full sequence is Protein TIC 20-v, chloroplastic (209 aa).

The N-terminal 49 residues, Met-1 to Leu-49, are a transit peptide targeting the chloroplast. The next 4 helical transmembrane spans lie at Ile-63 to Ile-83, Ala-103 to Val-123, Val-132 to Leu-152, and Thr-173 to Leu-193.

It belongs to the Tic20 family. Part of the Tic complex. In terms of tissue distribution, expressed in leaves, siliques and roots.

Its subcellular location is the plastid. It is found in the chloroplast inner membrane. Its function is as follows. May be involved in protein precursor import into chloroplasts. Not redundant with TIC20-I, TIC20-II or TIC20-IV. The polypeptide is Protein TIC 20-v, chloroplastic (TIC20-V) (Arabidopsis thaliana (Mouse-ear cress)).